A 276-amino-acid polypeptide reads, in one-letter code: Nuclear egress protein 2 (276 aa).

At 1–253 the chain is on the perinuclear space side; sequence MAGMGKPYGG…LFRAPRPGPP (253 aa). Over residues 212–225 the composition is skewed to low complexity; it reads HSSGAPGPGVAASG. Residues 212 to 237 form a disordered region; the sequence is HSSGAPGPGVAASGPPAPPGRGPARP. A helical membrane pass occupies residues 254 to 274; sequence ALLLLAAGLFLGAAIWWAVGA. The Nuclear portion of the chain corresponds to 275-276; it reads RL.

This sequence belongs to the herpesviridae NEC2 protein family. In terms of assembly, forms a heterohexameric complex with NEC1. Phosphorylated.

It is found in the host nucleus inner membrane. Plays an essential role in virion nuclear egress, the first step of virion release from infected cell. Within the host nucleus, NEC1 interacts with the newly formed capsid through the vertexes and directs it to the inner nuclear membrane by associating with NEC2. Induces the budding of the capsid at the inner nuclear membrane as well as its envelopment into the perinuclear space. There, the NEC1/NEC2 complex promotes the fusion of the enveloped capsid with the outer nuclear membrane and the subsequent release of the viral capsid into the cytoplasm where it will reach the secondary budding sites in the host Golgi or trans-Golgi network. The chain is Nuclear egress protein 2 from Homo sapiens (Human).